Reading from the N-terminus, the 215-residue chain is Protein LURP-one-related 4 (215 aa).

It belongs to the LOR family.

Functionally, might be related to the phospholipid scramblase and tubby-like superfamily of membrane tethered transcription factors. The protein is Protein LURP-one-related 4 of Arabidopsis thaliana (Mouse-ear cress).